The chain runs to 294 residues: MKVGFIGLGIMGKPMSKNLLKAGYSLVVADRNPEAIADVIAAGAETASTAKAIAEQCDVIITMLPNSPHVKEVALGENGIIEGAKPGTVLIDMSSIAPLASREISEALKAKGIDMLDAPVSGGEPKAIDGTLSVMVGGDKAIFDKYYDLMKAMAGSVVHTGEIGAGNVTKLANQVIVALNIAAMSEALTLATKAGVNPDLVYQAIRGGLAGSTVLDAKAPMVMDRNFKPGFRIDLHIKDLANALDTSHGVGAQLPLTAAVMEMMQALRADGLGTADHSALACYYEKLAKVEVTR.

Residues 4–18 (GFIG…MSKN) and S95 each bind NAD(+). Residue K170 is part of the active site. K238 is a binding site for NAD(+).

This sequence belongs to the HIBADH-related family. 2-hydroxy-3-oxopropionate reductase subfamily.

The catalysed reaction is (R)-glycerate + NADP(+) = 2-hydroxy-3-oxopropanoate + NADPH + H(+). It catalyses the reaction (R)-glycerate + NAD(+) = 2-hydroxy-3-oxopropanoate + NADH + H(+). The protein operates within carbohydrate acid metabolism; galactarate degradation; D-glycerate from galactarate: step 3/3. In terms of biological role, catalyzes the reduction of tatronate semialdehyde to D-glycerate. The protein is 2-hydroxy-3-oxopropionate reductase of Escherichia coli O6:H1 (strain CFT073 / ATCC 700928 / UPEC).